The sequence spans 603 residues: MDTLFRLVSLHHHHHHQHAASPSPPDQPHKSYPSSRGSTSSPSSHHTHNHTYYHHSHSHYNNNSNTNYYYQGGGGGGGGYYYAEEQQPAAYLEECGNGHQFYMDEDFSSSSSSRQFHSGTGAPSSAPVPPPPSATTSSAGGHGLFEAADFSFPQVDISLDFGGSPAVPSSSGAGAGAGAAPSSSGRWAAQLLMECARAVAGRDSQRVQQLMWMLNELASPYGDVDQKLASYFLQGLFARLTTSGPRTLRTLATASDRNASFDSTRRTALKFQELSPWTPFGHVAANGAILESFLEAAAAGAAAASSSSSSSSTPPTRLHILDLSNTFCTQWPTLLEALATRSSDDTPHLSITTVVPTAAPSAAAQRVMREIGQRLEKFARLMGVPFSFRAVHHAGDLADLDLAALDLREGGATAALAVNCVNALRGVARGRDAFVASLRRLEPRVVTVVEEEADLAAPEADASSEADTDAAFVKVFGEGLRFFSAYMDSLEESFPKTSNERLSLERAVGRAIVDLVSCPASQSAERRETAASWARRMRSAGFSPAAFSEDVADDVRSLLRRYKEGWSMRDAGGATDDAAGAAAAGAFLAWKEQPVVWASAWKP.

Disordered regions lie at residues 11–58 and 106–140; these read HHHH…HSHS and DFSS…SSAG. The span at 31-44 shows a compositional bias: low complexity; sequence SYPSSRGSTSSPSS. The segment covering 45-58 has biased composition (basic residues); sequence HHTHNHTYYHHSHS. Over residues 108–125 the composition is skewed to low complexity; sequence SSSSSSRQFHSGTGAPSS. In terms of domain architecture, GRAS spans 179–602; it reads AAPSSSGRWA…QPVVWASAWK (424 aa). The interval 186-249 is leucine repeat I (LRI); sequence RWAAQLLMEC…LTTSGPRTLR (64 aa). Residues 268–354 are VHIID; sequence ALKFQELSPW…DTPHLSITTV (87 aa). The VHIID signature appears at 318-322; the sequence is LHILD. Residues 370-406 form a leucine repeat II (LRII) region; it reads EIGQRLEKFARLMGVPFSFRAVHHAGDLADLDLAALD. The PFYRE stretch occupies residues 416 to 514; that stretch reads LAVNCVNALR…ERAVGRAIVD (99 aa). Positions 517 to 602 are SAW; sequence SCPASQSAER…QPVVWASAWK (86 aa).

Belongs to the GRAS family. Does not interact with SCR1.

It is found in the nucleus. In terms of biological role, putative transcription factor involved in asymmetric cell division. The protein is Protein SHORT-ROOT 2 (SHR2) of Oryza sativa subsp. indica (Rice).